An 87-amino-acid polypeptide reads, in one-letter code: Small ribosomal subunit protein bS20 (87 aa).

Belongs to the bacterial ribosomal protein bS20 family.

Binds directly to 16S ribosomal RNA. The protein is Small ribosomal subunit protein bS20 of Corynebacterium urealyticum (strain ATCC 43042 / DSM 7109).